The sequence spans 66 residues: MILVNVHAGNCDNTLRNFKKKLQRELYFRKMKEQRYYETPSAKRVRKAQEAARRQRKFARKKMFDE.

This sequence belongs to the bacterial ribosomal protein bS21 family.

In Rickettsia akari (strain Hartford), this protein is Small ribosomal subunit protein bS21.